The chain runs to 126 residues: UPF0538 protein C2orf76 homolog (126 aa).

Belongs to the UPF0538 family.

This is UPF0538 protein C2orf76 homolog from Pongo abelii (Sumatran orangutan).